The primary structure comprises 424 residues: Histidine--tRNA ligase (424 aa).

This sequence belongs to the class-II aminoacyl-tRNA synthetase family. In terms of assembly, homodimer.

The protein resides in the cytoplasm. The catalysed reaction is tRNA(His) + L-histidine + ATP = L-histidyl-tRNA(His) + AMP + diphosphate + H(+). The chain is Histidine--tRNA ligase from Klebsiella pneumoniae (strain 342).